A 350-amino-acid chain; its full sequence is Homoserine O-succinyltransferase (350 aa).

Cys-146 serves as the catalytic Acyl-thioester intermediate. Positions 167 and 196 each coordinate substrate. Catalysis depends on His-239, which acts as the Proton acceptor. Glu-241 is an active-site residue. Residue Arg-253 coordinates substrate.

Belongs to the MetA family.

The protein localises to the cytoplasm. It catalyses the reaction L-homoserine + succinyl-CoA = O-succinyl-L-homoserine + CoA. It participates in amino-acid biosynthesis; L-methionine biosynthesis via de novo pathway; O-succinyl-L-homoserine from L-homoserine: step 1/1. Its function is as follows. Transfers a succinyl group from succinyl-CoA to L-homoserine, forming succinyl-L-homoserine. The chain is Homoserine O-succinyltransferase from Cardiobacterium hominis (strain ATCC 15826 / DSM 8339 / NCTC 10426 / 6573).